The primary structure comprises 388 residues: Succinate--CoA ligase [ADP-forming] subunit beta (388 aa).

Positions 9 to 244 (KQLFARYGLP…QSQEDPREAQ (236 aa)) constitute an ATP-grasp domain. ATP-binding positions include K46, 53-55 (GRG), E99, T102, and E107. The Mg(2+) site is built by N199 and D213. Residues N264 and 321–323 (GIV) each bind substrate.

Belongs to the succinate/malate CoA ligase beta subunit family. Heterotetramer of two alpha and two beta subunits. The cofactor is Mg(2+).

The enzyme catalyses succinate + ATP + CoA = succinyl-CoA + ADP + phosphate. It catalyses the reaction GTP + succinate + CoA = succinyl-CoA + GDP + phosphate. Its pathway is carbohydrate metabolism; tricarboxylic acid cycle; succinate from succinyl-CoA (ligase route): step 1/1. In terms of biological role, succinyl-CoA synthetase functions in the citric acid cycle (TCA), coupling the hydrolysis of succinyl-CoA to the synthesis of either ATP or GTP and thus represents the only step of substrate-level phosphorylation in the TCA. The beta subunit provides nucleotide specificity of the enzyme and binds the substrate succinate, while the binding sites for coenzyme A and phosphate are found in the alpha subunit. This is Succinate--CoA ligase [ADP-forming] subunit beta from Escherichia coli O139:H28 (strain E24377A / ETEC).